Reading from the N-terminus, the 106-residue chain is Thioredoxin-2 (106 aa).

Residues 2–106 enclose the Thioredoxin domain; the sequence is VYQIKDKADL…RLEDVIKANI (105 aa). Residues Cys-32 and Cys-35 each act as nucleophile in the active site. A disulfide bridge connects residues Cys-32 and Cys-35.

This sequence belongs to the thioredoxin family.

Participates in various redox reactions through the reversible oxidation of its active center dithiol to a disulfide and catalyzes dithiol-disulfide exchange reactions. As a reducing substrate of peroxiredoxin 1, thioredoxin 2 is preferred over thioredoxin 1. The polypeptide is Thioredoxin-2 (Drosophila yakuba (Fruit fly)).